A 108-amino-acid polypeptide reads, in one-letter code: Sperm-egg fusion protein LLCFC1 (108 aa).

An N-terminal signal peptide occupies residues 1-30 (MTSLGSQLHRATFLTALLLLLLLQVKGVKT). Over residues 39 to 49 (GDKSQKDKVSS) the composition is skewed to basic and acidic residues. Residues 39-64 (GDKSQKDKVSSEDQGEEEYEEHFEAS) are disordered.

In terms of tissue distribution, detected in testicular germ cells and spermatozoa (at protein level). Abundantly expressed in testis.

It is found in the secreted. Sperm protein required for fusion of sperm with the egg membrane during fertilization. The polypeptide is Sperm-egg fusion protein LLCFC1 (Mus musculus (Mouse)).